Here is a 516-residue protein sequence, read N- to C-terminus: MAKNLEDFDKIIVLDFGSQYNQLITRRIRDFGIYSELLPHDLSIEKIKEMNPKGIIFSGGPNSVYDDGALKVDPEIFKLGIPILGICYGMQLMSYDLGGKVERAENKEYGRANITVEDPDSALFKGLPTKQYVWMSHGDLVTQAPEGFEVTASSKNCPIAAIANPDKKFYGIQFHAEVRNSEYGLDILKHFAFDVCGAVANWTMADFIDMQVDEIRKEVGDKKVILGLSGGVDSSVTATLLHKAIGDQLTAIFVDHGMLRKDEGDQVMKALNKDLGVNIIRVNAQERFLNKLKGVTDPEQKRKIIGKEFIEVFNEEAKKLKDVDFLAQGTLYTDVIESGTNTAQTIKSHHNVGGLPEDMNFKLIEPLRKLFKDEVRELGEKLGIPHDLVWRQPFPGPGLGIRVLGEVTEDKLKIVRESDAILREEIKKAGLQEKIWQYFTVLPGIRSVGVMGDGRTYDYTIGIRAVTSIDGMTADFAQIPWDVLGHISDRIVNEVDNVNRIVYDVTSKPPSTIEWE.

In terms of domain architecture, Glutamine amidotransferase type-1 spans 10–201; that stretch reads KIIVLDFGSQ…AFDVCGAVAN (192 aa). Cys-87 serves as the catalytic Nucleophile. Residues His-175 and Glu-177 contribute to the active site. The GMPS ATP-PPase domain maps to 202 to 391; that stretch reads WTMADFIDMQ…LGIPHDLVWR (190 aa). Position 229–235 (229–235) interacts with ATP; sequence SGGVDSS.

Homodimer.

It catalyses the reaction XMP + L-glutamine + ATP + H2O = GMP + L-glutamate + AMP + diphosphate + 2 H(+). It functions in the pathway purine metabolism; GMP biosynthesis; GMP from XMP (L-Gln route): step 1/1. In terms of biological role, catalyzes the synthesis of GMP from XMP. This chain is GMP synthase [glutamine-hydrolyzing], found in Lactobacillus acidophilus (strain ATCC 700396 / NCK56 / N2 / NCFM).